We begin with the raw amino-acid sequence, 330 residues long: Fructose-1,6-bisphosphatase class 1 (330 aa).

Mg(2+) contacts are provided by Glu-84, Asp-103, Leu-105, and Asp-106. Residues 106–109 (DGSS), Asn-196, and Lys-262 each bind substrate. Mg(2+) is bound at residue Glu-268.

The protein belongs to the FBPase class 1 family. In terms of assembly, homotetramer. It depends on Mg(2+) as a cofactor.

It localises to the cytoplasm. The catalysed reaction is beta-D-fructose 1,6-bisphosphate + H2O = beta-D-fructose 6-phosphate + phosphate. The protein operates within carbohydrate biosynthesis; gluconeogenesis. The protein is Fructose-1,6-bisphosphatase class 1 of Shewanella sp. (strain ANA-3).